Consider the following 347-residue polypeptide: Bombesin receptor-activated protein C6orf89 (347 aa).

The Cytoplasmic segment spans residues 1–58 (MDLAANEISIYDKLSETVDLVRQTGHQCGMSEKAIEKFIRQLLEKNEPQRPPPQYPLL). A helical transmembrane segment spans residues 59–79 (IVVYKVLATLGLILLTAYFVI). The Extracellular segment spans residues 80 to 347 (QPFSPLAPEP…ICDGTAFSEL (268 aa)).

As to quaternary structure, homodimer. Interacts with BRS3. Interacts (via N-terminus) with SIN3B. In terms of processing, glycosylated.

The protein localises to the golgi apparatus membrane. The protein resides in the midbody. Its subcellular location is the cytoplasm. It localises to the nucleus. It is found in the nucleolus. Exhibits histone deacetylase (HDAC) enhancer properties. May play a role in cell cycle progression and wound repair of bronchial epithelial cells. The protein is Bombesin receptor-activated protein C6orf89 (C6orf89) of Homo sapiens (Human).